Reading from the N-terminus, the 155-residue chain is Phospholipase A2 A2-actitoxin-Ucs2a (155 aa).

The N-terminal stretch at 1–19 (MKNNIILVILLGISVFVDC) is a signal peptide. The propeptide occupies 20 to 42 (LPLNDQEEDKSLNAQESEVSAVQ). Cystine bridges form between cysteine 55–cysteine 118, cysteine 71–cysteine 87, cysteine 86–cysteine 143, cysteine 93–cysteine 136, cysteine 100–cysteine 129, and cysteine 122–cysteine 134. The Ca(2+) site is built by glycine 72 and glycine 74. The active site involves histidine 90. Ca(2+) is bound at residue aspartate 91. Aspartate 137 is a catalytic residue.

It belongs to the phospholipase A2 family. Ca(2+) serves as cofactor.

Its subcellular location is the secreted. The protein localises to the nematocyst. The enzyme catalyses a 1,2-diacyl-sn-glycero-3-phosphocholine + H2O = a 1-acyl-sn-glycero-3-phosphocholine + a fatty acid + H(+). Its function is as follows. PLA2 catalyzes the calcium-dependent hydrolysis of the 2-acyl groups in 3-sn-phosphoglycerides. The chain is Phospholipase A2 A2-actitoxin-Ucs2a from Urticina crassicornis (Mottled anemone).